The sequence spans 254 residues: Proteasome subunit alpha type-4 (254 aa).

Residue T60 is modified to Phosphothreonine. The segment at 235–254 (QIEQEKQEQQEQDKKKKSNH) is disordered. Residues 237 to 248 (EQEKQEQQEQDK) are compositionally biased toward basic and acidic residues.

It belongs to the peptidase T1A family. The 26S proteasome consists of a 20S proteasome core and two 19S regulatory subunits. The 20S proteasome core is composed of 28 subunits that are arranged in four stacked rings, resulting in a barrel-shaped structure. The two end rings are each formed by seven alpha subunits, and the two central rings are each formed by seven beta subunits. The catalytic chamber with the active sites is on the inside of the barrel. Interacts with CIC1.

It is found in the cytoplasm. It localises to the nucleus. The proteasome degrades poly-ubiquitinated proteins in the cytoplasm and in the nucleus. It is essential for the regulated turnover of proteins and for the removal of misfolded proteins. The proteasome is a multicatalytic proteinase complex that is characterized by its ability to cleave peptides with Arg, Phe, Tyr, Leu, and Glu adjacent to the leaving group at neutral or slightly basic pH. It has an ATP-dependent proteolytic activity. The protein is Proteasome subunit alpha type-4 (PRE6) of Saccharomyces cerevisiae (strain ATCC 204508 / S288c) (Baker's yeast).